We begin with the raw amino-acid sequence, 480 residues long: MNFETVIGLEVHVELNTNSKIFSPTSAHFGNDQNANTNVIDWSFPGVLPVLNKGVVDAGIKAALALNMDLHKKMHFDRKNYFYPDNPKAYQISQFDEPIGYNGWIEVELEDGTTKKIGIERAHLEEDAGKNTHGTDGYSYVDLNRQGVPLIEIVSEADMRSPEEAYAYLTALKEVIQYAGISDVKMEEGSMRVDANISLRPYGQEKFGTKTELKNLNSFSNVRKGLEYEVQRQAEILRSGGQIRQETRRYDEANKTTILMRVKEGAADYRYFPEPDLPLFEISDEWIEEMRTELPEFPKERRARYVSDLGLSDYDASQLTANKVTSDFFEKAVALGGDAKQVSNWLQGEVAQFLNAEGKTLEQIELTPENLVEMIAIIEDGTISSKIAKKVFVHLAKNGGGAREYVEKAGMVQISDPAILIPIIHQVFADNEAAVADFKSGKRNADKAFTGFLMKATKGQANPQVALKLLAQELAKLKEN.

The protein belongs to the GatB/GatE family. GatB subfamily. As to quaternary structure, heterotrimer of A, B and C subunits.

It carries out the reaction L-glutamyl-tRNA(Gln) + L-glutamine + ATP + H2O = L-glutaminyl-tRNA(Gln) + L-glutamate + ADP + phosphate + H(+). The enzyme catalyses L-aspartyl-tRNA(Asn) + L-glutamine + ATP + H2O = L-asparaginyl-tRNA(Asn) + L-glutamate + ADP + phosphate + 2 H(+). Allows the formation of correctly charged Asn-tRNA(Asn) or Gln-tRNA(Gln) through the transamidation of misacylated Asp-tRNA(Asn) or Glu-tRNA(Gln) in organisms which lack either or both of asparaginyl-tRNA or glutaminyl-tRNA synthetases. The reaction takes place in the presence of glutamine and ATP through an activated phospho-Asp-tRNA(Asn) or phospho-Glu-tRNA(Gln). In Streptococcus pneumoniae (strain CGSP14), this protein is Aspartyl/glutamyl-tRNA(Asn/Gln) amidotransferase subunit B.